The chain runs to 201 residues: Auxin-binding protein 1 (201 aa).

The first 38 residues, 1 to 38 (MAPDLSELAAAAAARGAYLAGVGVAVLLAASFLPVAES), serve as a signal peptide directing secretion. An intrachain disulfide couples cysteine 40 to cysteine 193. Zn(2+) is bound by residues histidine 95, histidine 97, and glutamate 101. The N-linked (GlcNAc...) asparagine glycan is linked to asparagine 133. Residue histidine 144 coordinates Zn(2+). A Prevents secretion from ER motif is present at residues 198-201 (KDEL).

In terms of assembly, homodimer. Post-translationally, glycosylated. In terms of tissue distribution, expressed in roots, coleoptiles, leaves, stems, tassels and ears.

The protein localises to the endoplasmic reticulum lumen. Functionally, receptor for the plant hormone auxin. The chain is Auxin-binding protein 1 from Zea mays (Maize).